The following is a 120-amino-acid chain: NAD(P)H-quinone oxidoreductase subunit 3, chloroplastic (120 aa).

The next 3 helical transmembrane spans lie at phenylalanine 9–glycine 29, methionine 64–methionine 84, and valine 88–leucine 108.

Belongs to the complex I subunit 3 family. NDH is composed of at least 16 different subunits, 5 of which are encoded in the nucleus.

The protein resides in the plastid. It is found in the chloroplast thylakoid membrane. It carries out the reaction a plastoquinone + NADH + (n+1) H(+)(in) = a plastoquinol + NAD(+) + n H(+)(out). The enzyme catalyses a plastoquinone + NADPH + (n+1) H(+)(in) = a plastoquinol + NADP(+) + n H(+)(out). In terms of biological role, NDH shuttles electrons from NAD(P)H:plastoquinone, via FMN and iron-sulfur (Fe-S) centers, to quinones in the photosynthetic chain and possibly in a chloroplast respiratory chain. The immediate electron acceptor for the enzyme in this species is believed to be plastoquinone. Couples the redox reaction to proton translocation, and thus conserves the redox energy in a proton gradient. This is NAD(P)H-quinone oxidoreductase subunit 3, chloroplastic from Nicotiana tabacum (Common tobacco).